The sequence spans 596 residues: Nitrite reductase (596 aa).

Positions 1-29 (MRQRTPFARPGLLASAALALVLGPLAVAA) are cleaved as a signal peptide. The segment at 30-76 (QEQAAPPKDPAAALEDHKTKTDNRYEPSLDNLAQQDVAALGAPEGIP) is N-terminal tail. Residue His46 coordinates heme c. Tyr54 and Ser57 together coordinate heme d1. The 86-residue stretch at 77-162 (ALSDAQYNEA…ANYLLLDPAA (86 aa)) folds into the Cytochrome c domain. Heme c-binding residues include Cys94, Cys97, His98, Lys108, and Tyr122. 10 residues coordinate heme d1: Trp138, Arg203, His229, Arg232, Arg245, Arg272, Tyr292, Arg420, Gln536, and Thr583. The interval 163-596 (PPEFGMKEMR…NVYNTMTDTY (434 aa)) is D1-heme domain.

In terms of assembly, homodimer. Requires heme c as cofactor. It depends on heme as a cofactor.

The protein localises to the periplasm. The catalysed reaction is nitric oxide + Fe(III)-[cytochrome c] + H2O = Fe(II)-[cytochrome c] + nitrite + 2 H(+). It catalyses the reaction A + NH4(+) + H2O = hydroxylamine + AH2 + H(+). Functionally, inactivation of this cytochrome oxidase results in the loss of nitrite and nitric oxide reductase activities, but not of nitrous oxide reductase activity. This is Nitrite reductase (nirS) from Paracoccus denitrificans (strain Pd 1222).